Consider the following 252-residue polypeptide: 5'-nucleotidase SurE (252 aa).

4 residues coordinate a divalent metal cation: aspartate 8, aspartate 9, serine 39, and asparagine 91.

The protein belongs to the SurE nucleotidase family. The cofactor is a divalent metal cation.

Its subcellular location is the cytoplasm. It carries out the reaction a ribonucleoside 5'-phosphate + H2O = a ribonucleoside + phosphate. In terms of biological role, nucleotidase that shows phosphatase activity on nucleoside 5'-monophosphates. This is 5'-nucleotidase SurE from Bordetella pertussis (strain Tohama I / ATCC BAA-589 / NCTC 13251).